The following is a 396-amino-acid chain: NADH-ubiquinone oxidoreductase 49 kDa subunit (396 aa).

It belongs to the complex I 49 kDa subunit family.

It localises to the mitochondrion. The enzyme catalyses a ubiquinone + NADH + 5 H(+)(in) = a ubiquinol + NAD(+) + 4 H(+)(out). Core subunit of the mitochondrial membrane respiratory chain NADH dehydrogenase (Complex I) that is believed to belong to the minimal assembly required for catalysis. Complex I functions in the transfer of electrons from NADH to the respiratory chain. The immediate electron acceptor for the enzyme is believed to be ubiquinone. Component of the iron-sulfur (IP) fragment of the enzyme. Component of the iron-sulfur (IP) fragment of the enzyme. In Reclinomonas americana, this protein is NADH-ubiquinone oxidoreductase 49 kDa subunit (NAD7).